We begin with the raw amino-acid sequence, 578 residues long: Proline--tRNA ligase (578 aa).

The protein belongs to the class-II aminoacyl-tRNA synthetase family. ProS type 1 subfamily. In terms of assembly, homodimer.

Its subcellular location is the cytoplasm. It carries out the reaction tRNA(Pro) + L-proline + ATP = L-prolyl-tRNA(Pro) + AMP + diphosphate. Its function is as follows. Catalyzes the attachment of proline to tRNA(Pro) in a two-step reaction: proline is first activated by ATP to form Pro-AMP and then transferred to the acceptor end of tRNA(Pro). As ProRS can inadvertently accommodate and process non-cognate amino acids such as alanine and cysteine, to avoid such errors it has two additional distinct editing activities against alanine. One activity is designated as 'pretransfer' editing and involves the tRNA(Pro)-independent hydrolysis of activated Ala-AMP. The other activity is designated 'posttransfer' editing and involves deacylation of mischarged Ala-tRNA(Pro). The misacylated Cys-tRNA(Pro) is not edited by ProRS. The chain is Proline--tRNA ligase from Brachyspira hyodysenteriae (strain ATCC 49526 / WA1).